An 891-amino-acid polypeptide reads, in one-letter code: DNA mismatch repair protein MutS (891 aa).

646 to 653 (GPNMAGKS) serves as a coordination point for ATP.

It belongs to the DNA mismatch repair MutS family.

This protein is involved in the repair of mismatches in DNA. It is possible that it carries out the mismatch recognition step. This protein has a weak ATPase activity. The sequence is that of DNA mismatch repair protein MutS from Rickettsia canadensis (strain McKiel).